Here is a 268-residue protein sequence, read N- to C-terminus: Ribosomal RNA small subunit methyltransferase A (268 aa).

6 residues coordinate S-adenosyl-L-methionine: Asn-18, Leu-20, Gly-45, Glu-66, Asp-91, and Asn-112.

Belongs to the class I-like SAM-binding methyltransferase superfamily. rRNA adenine N(6)-methyltransferase family. RsmA subfamily.

It is found in the cytoplasm. It carries out the reaction adenosine(1518)/adenosine(1519) in 16S rRNA + 4 S-adenosyl-L-methionine = N(6)-dimethyladenosine(1518)/N(6)-dimethyladenosine(1519) in 16S rRNA + 4 S-adenosyl-L-homocysteine + 4 H(+). Its function is as follows. Specifically dimethylates two adjacent adenosines (A1518 and A1519) in the loop of a conserved hairpin near the 3'-end of 16S rRNA in the 30S particle. May play a critical role in biogenesis of 30S subunits. The polypeptide is Ribosomal RNA small subunit methyltransferase A (Vibrio vulnificus (strain CMCP6)).